Consider the following 700-residue polypeptide: Elongation factor G (700 aa).

A tr-type G domain is found at 8–290 (ERYRNIGISA…AVIDYLPSPV (283 aa)). GTP-binding positions include 17–24 (AHIDAGKT), 88–92 (DTPGH), and 142–145 (NKMD).

The protein belongs to the TRAFAC class translation factor GTPase superfamily. Classic translation factor GTPase family. EF-G/EF-2 subfamily.

It is found in the cytoplasm. Its function is as follows. Catalyzes the GTP-dependent ribosomal translocation step during translation elongation. During this step, the ribosome changes from the pre-translocational (PRE) to the post-translocational (POST) state as the newly formed A-site-bound peptidyl-tRNA and P-site-bound deacylated tRNA move to the P and E sites, respectively. Catalyzes the coordinated movement of the two tRNA molecules, the mRNA and conformational changes in the ribosome. This Paracidovorax citrulli (strain AAC00-1) (Acidovorax citrulli) protein is Elongation factor G.